The sequence spans 378 residues: Lipid-A-disaccharide synthase (378 aa).

The protein belongs to the LpxB family.

The catalysed reaction is a lipid X + a UDP-2-N,3-O-bis[(3R)-3-hydroxyacyl]-alpha-D-glucosamine = a lipid A disaccharide + UDP + H(+). It functions in the pathway bacterial outer membrane biogenesis; LPS lipid A biosynthesis. Functionally, condensation of UDP-2,3-diacylglucosamine and 2,3-diacylglucosamine-1-phosphate to form lipid A disaccharide, a precursor of lipid A, a phosphorylated glycolipid that anchors the lipopolysaccharide to the outer membrane of the cell. The chain is Lipid-A-disaccharide synthase from Methylobacillus flagellatus (strain ATCC 51484 / DSM 6875 / VKM B-1610 / KT).